The following is a 424-amino-acid chain: 26S proteasome regulatory subunit 4 homolog (424 aa).

A compositionally biased stretch (basic and acidic residues) spans 1 to 11 (MSRDKSERDNL). A disordered region spans residues 1-33 (MSRDKSERDNLQDTTTINLRRRRRVKEGKAASK). 210-217 (GLPGTGKT) provides a ligand contact to ATP.

The protein belongs to the AAA ATPase family. The 26S proteasome consists of a 20S proteasome core and two 19S regulatory subunits. The 20S proteasome core is composed of 28 subunits that are arranged in four stacked rings, resulting in a barrel-shaped structure. The two end rings are each formed by seven alpha subunits, and the two central rings are each formed by seven beta subunits. The catalytic chamber with the active sites is on the inside of the barrel.

It is found in the cytoplasm. The protein localises to the nucleus. Functionally, acts as a regulatory subunit of the 26S proteasome which degrades poly-ubiquitinated proteins in the cytoplasm and in the nucleus. It is essential for the regulated turnover of proteins and for the removal of misfolded proteins. The proteasome is a multicatalytic proteinase complex that is characterized by its ability to cleave peptides with Arg, Phe, Tyr, Leu, and Glu adjacent to the leaving group at neutral or slightly basic pH. The sequence is that of 26S proteasome regulatory subunit 4 homolog (RPT2) from Encephalitozoon cuniculi (strain GB-M1) (Microsporidian parasite).